We begin with the raw amino-acid sequence, 41 residues long: uncharacterized protein (41 aa).

It is found in the plastid. It localises to the chloroplast. This is an uncharacterized protein from Trieres chinensis (Marine centric diatom).